A 699-amino-acid polypeptide reads, in one-letter code: Polyribonucleotide nucleotidyltransferase (699 aa).

Residues aspartate 485 and aspartate 491 each contribute to the Mg(2+) site. Residues 552–611 form the KH domain; sequence PRITTIKINPEKIRDVIGKGGAVIRALTEETGTTIELEDDGTVKIASSNGEATKEAIRRI. One can recognise an S1 motif domain in the interval 621–689; it reads GRIYNGKVIR…RQGRVRLSIK (69 aa).

The protein belongs to the polyribonucleotide nucleotidyltransferase family. As to quaternary structure, component of the RNA degradosome, which is a multiprotein complex involved in RNA processing and mRNA degradation. Mg(2+) is required as a cofactor.

The protein localises to the cytoplasm. The catalysed reaction is RNA(n+1) + phosphate = RNA(n) + a ribonucleoside 5'-diphosphate. Involved in mRNA degradation. Catalyzes the phosphorolysis of single-stranded polyribonucleotides processively in the 3'- to 5'-direction. The sequence is that of Polyribonucleotide nucleotidyltransferase from Shewanella sp. (strain MR-4).